The sequence spans 349 residues: Phosphoribosylformylglycinamidine cyclo-ligase (349 aa).

This sequence belongs to the AIR synthase family.

Its subcellular location is the cytoplasm. It carries out the reaction 2-formamido-N(1)-(5-O-phospho-beta-D-ribosyl)acetamidine + ATP = 5-amino-1-(5-phospho-beta-D-ribosyl)imidazole + ADP + phosphate + H(+). The protein operates within purine metabolism; IMP biosynthesis via de novo pathway; 5-amino-1-(5-phospho-D-ribosyl)imidazole from N(2)-formyl-N(1)-(5-phospho-D-ribosyl)glycinamide: step 2/2. The chain is Phosphoribosylformylglycinamidine cyclo-ligase from Methanococcus maripaludis (strain DSM 14266 / JCM 13030 / NBRC 101832 / S2 / LL).